The sequence spans 902 residues: Glycogen phosphorylase (902 aa).

Residues 1–21 form a disordered region; that stretch reads MPPASTSTTNDMITEEPTSPH. Thr31 is modified (phosphothreonine). A Phosphoserine modification is found at Ser333. Position 751 is an N6-(pyridoxal phosphate)lysine (Lys751).

It belongs to the glycogen phosphorylase family. In terms of assembly, homodimer. Pyridoxal 5'-phosphate serves as cofactor.

The protein localises to the cytoplasm. Its subcellular location is the cytosol. It carries out the reaction [(1-&gt;4)-alpha-D-glucosyl](n) + phosphate = [(1-&gt;4)-alpha-D-glucosyl](n-1) + alpha-D-glucose 1-phosphate. With respect to regulation, activated by phosphorylation of Thr-31. Its function is as follows. Phosphorylase is an important allosteric enzyme in carbohydrate metabolism. Enzymes from different sources differ in their regulatory mechanisms and in their natural substrates. However, all known phosphorylases share catalytic and structural properties. This is Glycogen phosphorylase (GPH1) from Saccharomyces cerevisiae (strain ATCC 204508 / S288c) (Baker's yeast).